We begin with the raw amino-acid sequence, 255 residues long: Cyclic di-GMP phosphodiesterase PdeH (255 aa).

Residues 13–255 (EASIESLQER…ETLNTAVLAL (243 aa)) enclose the EAL domain.

It carries out the reaction 3',3'-c-di-GMP + H2O = 5'-phosphoguanylyl(3'-&gt;5')guanosine + H(+). Its function is as follows. Involved in the control of the switch from cell motility to adhesion via regulation of cellular levels of cyclic-di-GMP (c-di-GMP). Part of a signaling cascade that regulates curli biosynthesis. The cascade is composed of two c-di-GMP control modules, in which c-di-GMP controlled by the DgcE/PdeH pair (module I) regulates the activity of the DgcM/PdeR pair (module II), which in turn regulates activity of the transcription factor MlrA and expression of the master biofilm regulator csgD. Effect on flagella is controlled via the c-di-GMP-binding flagellar brake protein YcgR. This is Cyclic di-GMP phosphodiesterase PdeH from Escherichia coli (strain K12).